We begin with the raw amino-acid sequence, 192 residues long: Anthranilate synthase component 2 (192 aa).

Positions 3-192 (DILLLDNIDS…LEQTLAWALA (190 aa)) constitute a Glutamine amidotransferase type-1 domain. An L-glutamine-binding site is contributed by 57 to 59 (GPG). Cysteine 84 serves as the catalytic Nucleophile; for GATase activity. L-glutamine is bound by residues glutamine 88 and 134-135 (SL). Residues histidine 170 and glutamate 172 each act as for GATase activity in the active site.

As to quaternary structure, heterotetramer consisting of two non-identical subunits: a beta subunit (TrpG) and a large alpha subunit (TrpE).

The catalysed reaction is chorismate + L-glutamine = anthranilate + pyruvate + L-glutamate + H(+). It functions in the pathway amino-acid biosynthesis; L-tryptophan biosynthesis; L-tryptophan from chorismate: step 1/5. Part of a heterotetrameric complex that catalyzes the two-step biosynthesis of anthranilate, an intermediate in the biosynthesis of L-tryptophan. In the first step, the glutamine-binding beta subunit (TrpG) of anthranilate synthase (AS) provides the glutamine amidotransferase activity which generates ammonia as a substrate that, along with chorismate, is used in the second step, catalyzed by the large alpha subunit of AS (TrpE) to produce anthranilate. In the absence of TrpG, TrpE can synthesize anthranilate directly from chorismate and high concentrations of ammonia. The sequence is that of Anthranilate synthase component 2 (trpG) from Yersinia pestis.